The primary structure comprises 147 residues: uncharacterized protein (147 aa).

Residues 30 to 102 (GRCEQVALSS…TPPTRPESIF (73 aa)) form a disordered region. Residues 62–71 (RPSTGETFVQ) are compositionally biased toward polar residues.

This is an uncharacterized protein from Homo sapiens (Human).